Here is a 505-residue protein sequence, read N- to C-terminus: 2-isopropylmalate synthase (505 aa).

In terms of domain architecture, Pyruvate carboxyltransferase spans Val-5–Tyr-267. Mn(2+) contacts are provided by Asp-14, His-202, His-204, and Asn-238. A regulatory domain region spans residues Thr-391 to Lys-505.

Belongs to the alpha-IPM synthase/homocitrate synthase family. LeuA type 1 subfamily. In terms of assembly, homodimer. It depends on Mn(2+) as a cofactor.

The protein localises to the cytoplasm. It carries out the reaction 3-methyl-2-oxobutanoate + acetyl-CoA + H2O = (2S)-2-isopropylmalate + CoA + H(+). It functions in the pathway amino-acid biosynthesis; L-leucine biosynthesis; L-leucine from 3-methyl-2-oxobutanoate: step 1/4. In terms of biological role, catalyzes the condensation of the acetyl group of acetyl-CoA with 3-methyl-2-oxobutanoate (2-ketoisovalerate) to form 3-carboxy-3-hydroxy-4-methylpentanoate (2-isopropylmalate). The protein is 2-isopropylmalate synthase of Pelotomaculum thermopropionicum (strain DSM 13744 / JCM 10971 / SI).